The primary structure comprises 2161 residues: Voltage-dependent L-type calcium channel subunit alpha-1D (2161 aa).

3 disordered regions span residues 1 to 21, 30 to 49, and 64 to 100; these read MMMMMMMKKMQHQRQQQADHA, TRLPLSGEGPTSQPNSSKQT, and KAAQTMSTSAPPPVGSLSQRKRQQYAKSKKQGNSSNS. Residues 1–126 lie on the Cytoplasmic side of the membrane; sequence MMMMMMMKKM…RACISIVEWK (126 aa). The segment covering 38-49 has biased composition (polar residues); that stretch reads GPTSQPNSSKQT. Residues 82–93 are compositionally biased toward basic residues; sequence QRKRQQYAKSKK. An I repeat occupies 113–409; the sequence is NPIRRACISI…LVLGVLSGEF (297 aa). Residues 127–145 form a helical membrane-spanning segment; that stretch reads PFDIFILLAIFANCVALAI. Over 146–163 the chain is Extracellular; that stretch reads YIPFPEDDSNSTNHNLEK. An N-linked (GlcNAc...) asparagine glycan is attached at asparagine 155. Residues 164 to 183 form a helical membrane-spanning segment; it reads VEYAFLIIFTVETFLKIIAY. Over 184–195 the chain is Cytoplasmic; the sequence is GLLLHPNAYVRN. Residues 196–214 traverse the membrane as a helical segment; that stretch reads GWNLLDFVIVIVGLFSVIL. Residues 215 to 235 lie on the Extracellular side of the membrane; the sequence is EQLTKETEGGNHSSGKSGGFD. N-linked (GlcNAc...) asparagine glycosylation is present at asparagine 225. A helical membrane pass occupies residues 236–254; the sequence is VKALRAFRVLRPLRLVSGV. Topologically, residues 255-273 are cytoplasmic; that stretch reads PSLQVVLNSIIKAMVPLLH. A helical transmembrane segment spans residues 274-293; the sequence is IALLVLFVIIIYAIIGLELF. Topologically, residues 294-381 are extracellular; that stretch reads IGKMHKTCFF…WMNDAMGFEL (88 aa). Asparagine 329 is a glycosylation site (N-linked (GlcNAc...) asparagine). Residue glutamate 364 participates in Ca(2+) binding. A helical transmembrane segment spans residues 382–406; the sequence is PWVYFVSLVIFGSFFVLNLVLGVLS. At 407–523 the chain is on the cytoplasmic side; it reads GEFSKEREKA…RRCRAAVKSV (117 aa). Residues 429-446 form a binding to the beta subunit region; sequence QQLEEDLKGYLDWITQAE. Residues 449–482 form a disordered region; the sequence is DPENEEEGGEEGKRNTSMPTSETESVNTENVSGE. Over residues 463–479 the composition is skewed to polar residues; the sequence is NTSMPTSETESVNTENV. The stretch at 509–755 is one II repeat; the sequence is NRFNRRRCRA…VFLAIAVDNL (247 aa). A helical transmembrane segment spans residues 524–543; the sequence is TFYWLVIVLVFLNTLTISSE. Over 544–558 the chain is Extracellular; that stretch reads HYNQPDWLTQIQDIA. A helical membrane pass occupies residues 559–577; it reads NKVLLALFTCEMLVKMYSL. Over 578–585 the chain is Cytoplasmic; it reads GLQAYFVS. Residues 586 to 604 traverse the membrane as a helical segment; that stretch reads LFNRFDCFVVCGGITETIL. Over 605 to 614 the chain is Extracellular; that stretch reads VELEIMSPLG. A helical transmembrane segment spans residues 615-633; it reads ISVFRCVRLLRIFKVTRHW. At 634 to 652 the chain is on the cytoplasmic side; sequence TSLSNLVASLLNSMKSIAS. The helical transmembrane segment at 653-673 threads the bilayer; the sequence is LLLLLFLFIIIFSLLGMQLFG. The Extracellular segment spans residues 674-727; it reads GKFNFDETQTKRSTFDNFPQALLTVFQILTGEDWNAVMYDGIMAYGGPSSSGMI. Glutamate 705 contacts Ca(2+). Residues 728–752 form a helical membrane-spanning segment; it reads VCIYFIILFICGNYILLNVFLAIAV. Residues 753-886 are Cytoplasmic-facing; it reads DNLADAESLN…VGCHKLINHH (134 aa). Over residues 766–790 the composition is skewed to basic and acidic residues; sequence KEEAEEKERKKIARKESLENKKNNK. Residues 766 to 850 form a disordered region; the sequence is KEEAEEKERK…AGPRPRRISE (85 aa). The span at 791–802 shows a compositional bias: polar residues; sequence PEVNQIANSDNK. The span at 825–838 shows a compositional bias: acidic residues; the sequence is VGEEEEEEEEDEPE. The stretch at 873–1155 is one III repeat; the sequence is NPIRVGCHKL…IFVGFVIVTF (283 aa). Residues 887–905 form a helical membrane-spanning segment; it reads IFTNLILVFIMLSSAALAA. Residues 906 to 921 are Extracellular-facing; that stretch reads EDPIRSHSFRNTILGY. The chain crosses the membrane as a helical span at residues 922 to 941; it reads FDYAFTAIFTVEILLKMTTF. The Cytoplasmic portion of the chain corresponds to 942–953; the sequence is GAFLHKGAFCRN. Residues 954–972 form a helical membrane-spanning segment; that stretch reads YFNLLDMLVVGVSLVSFGI. Residues 973-978 lie on the Extracellular side of the membrane; that stretch reads QSSAIS. A helical membrane pass occupies residues 979-998; that stretch reads VVKILRVLRVLRPLRAINRA. Residues 999 to 1017 are Cytoplasmic-facing; it reads KGLKHVVQCVFVAIRTIGN. The chain crosses the membrane as a helical span at residues 1018–1037; sequence IMIVTTLLQFMFACIGVQLF. The Extracellular portion of the chain corresponds to 1038 to 1127; it reads KGKFYRCTDE…IGPIYNHRVE (90 aa). The dihydropyridine binding stretch occupies residues 1075–1165; the sequence is RIWQNSDFNF…QEQGEKEYKN (91 aa). Residue glutamate 1101 coordinates Ca(2+). The chain crosses the membrane as a helical span at residues 1128-1148; sequence ISIFFIIYIIIVAFFMMNIFV. Residues 1149-1205 lie on the Cytoplasmic side of the membrane; sequence GFVIVTFQEQGEKEYKNCELDKNQRQCVEYALKARPLRRYIPKNPYQYKFWYVVNSS. One copy of the IV repeat lies at 1192-1467; that stretch reads NPYQYKFWYV…LFVAVIMDNF (276 aa). The chain crosses the membrane as a helical span at residues 1206–1224; the sequence is PFEYMMFVLIMLNTLCLAM. Residues 1225-1239 are Extracellular-facing; it reads QHYEQSKMFNDAMDI. A helical transmembrane segment spans residues 1240 to 1259; the sequence is LNMVFTGVFTVEMVLKVIAF. The Cytoplasmic portion of the chain corresponds to 1260–1266; the sequence is KPKGYFS. A helical membrane pass occupies residues 1267–1288; the sequence is DAWNTFDSLIVIGSIIDVALSE. At 1289–1313 the chain is on the extracellular side; the sequence is ADPTESENVPVPTATPGNSEESNRI. The helical transmembrane segment at 1314–1333 threads the bilayer; it reads SITFFRLFRVMRLVKLLSRG. The Cytoplasmic segment spans residues 1334 to 1352; that stretch reads EGIRTLLWTFIKSFQALPY. A helical membrane pass occupies residues 1353 to 1372; it reads VALLIAMLFFIYAVIGMQMF. Residues 1373–1439 lie on the Extracellular side of the membrane; it reads GKVAMRDNNQ…GEEYTCGSNF (67 aa). Residues 1420–1486 form a dihydropyridine binding region; that stretch reads LCDPESDYNP…LGPHHLDEFK (67 aa). Positions 1432–1475 are phenylalkylamine binding; that stretch reads EYTCGSNFAIVYFISFYMLCAFLIINLFVAVIMDNFDYLTRDWS. A helical transmembrane segment spans residues 1440 to 1464; that stretch reads AIVYFISFYMLCAFLIINLFVAVIM. The Cytoplasmic segment spans residues 1465–2161; sequence DNFDYLTRDW…ADEMICITTL (697 aa). Disordered regions lie at residues 1659 to 1678, 1684 to 1804, 1872 to 1919, and 2108 to 2152; these read SCDLQDDEPEETKREEEDDV, ALLG…VKRT, PGRN…ASHR, and NGNV…EDLA. Residues 1745–1763 show a composition bias toward polar residues; it reads SIGKQVPTSTNANLNNANM. The segment covering 1779–1797 has biased composition (basic and acidic residues); it reads HVSENGHHSSHKHDREPQR. Positions 2138–2152 are enriched in acidic residues; that stretch reads SDEEPDPGRDEEDLA.

This sequence belongs to the calcium channel alpha-1 subunit (TC 1.A.1.11) family. CACNA1D subfamily. In terms of assembly, voltage-dependent calcium channels are multisubunit complexes, consisting of alpha-1, alpha-2, beta and delta subunits in a 1:1:1:1 ratio. The channel activity is directed by the pore-forming and voltage-sensitive alpha-1 subunit. In many cases, this subunit is sufficient to generate voltage-sensitive calcium channel activity. The auxiliary subunits beta and alpha-2/delta linked by a disulfide bridge regulate the channel activity. Channel activity is further modulated, depending on the presence of specific delta subunit isoforms. Interacts (via IQ domain) with CABP1 and CABP4 in a calcium independent manner. Interacts with RIMBP2. As to expression, expressed in pancreatic islets and in brain, where it has been seen in cerebral cortex, hippocampus, basal ganglia, habenula and thalamus. Expressed in the small cell lung carcinoma cell line SCC-9. No expression in skeletal muscle.

The protein localises to the membrane. The catalysed reaction is Ca(2+)(in) = Ca(2+)(out). In terms of biological role, voltage-sensitive calcium channels (VSCC) mediate the entry of calcium ions into excitable cells and are also involved in a variety of calcium-dependent processes, including muscle contraction, hormone or neurotransmitter release, gene expression, cell motility, cell division and cell death. The isoform alpha-1D gives rise to L-type calcium currents. Long-lasting (L-type) calcium channels belong to the 'high-voltage activated' (HVA) group. They are blocked by dihydropyridines (DHP), phenylalkylamines, and by benzothiazepines. Functionally, voltage-sensitive calcium channels (VSCC) mediate the entry of calcium ions into excitable cells and are also involved in a variety of calcium-dependent processes, including muscle contraction, hormone or neurotransmitter release, gene expression, cell motility, cell division and cell death. The isoform alpha-1D gives rise to L-type calcium currents. In Homo sapiens (Human), this protein is Voltage-dependent L-type calcium channel subunit alpha-1D (CACNA1D).